Consider the following 295-residue polypeptide: 4-hydroxy-tetrahydrodipicolinate synthase (295 aa).

Threonine 47 contacts pyruvate. Tyrosine 135 (proton donor/acceptor) is an active-site residue. Catalysis depends on lysine 163, which acts as the Schiff-base intermediate with substrate. Isoleucine 206 contacts pyruvate.

Belongs to the DapA family. As to quaternary structure, homodimer.

The protein localises to the cytoplasm. It catalyses the reaction L-aspartate 4-semialdehyde + pyruvate = (2S,4S)-4-hydroxy-2,3,4,5-tetrahydrodipicolinate + H2O + H(+). It participates in amino-acid biosynthesis; L-lysine biosynthesis via DAP pathway; (S)-tetrahydrodipicolinate from L-aspartate: step 3/4. Functionally, catalyzes the condensation of (S)-aspartate-beta-semialdehyde [(S)-ASA] and pyruvate to 4-hydroxy-tetrahydrodipicolinate (HTPA). The polypeptide is 4-hydroxy-tetrahydrodipicolinate synthase (Staphylococcus aureus (strain MSSA476)).